The primary structure comprises 227 residues: Cytochrome c oxidase subunit 2 (227 aa).

Residues 1–14 lie on the Mitochondrial intermembrane side of the membrane; sequence MAYPFQLGLQDATS. The chain crosses the membrane as a helical span at residues 15–45; sequence PIMEELANFHDHTLMIVFLISSLVLYIISSM. Topologically, residues 46–59 are mitochondrial matrix; it reads LTTKLTHTSTMDAQ. A helical transmembrane segment spans residues 60–87; sequence EVETIWTILPAVILILIALPSLRILYMM. Topologically, residues 88-227 are mitochondrial intermembrane; sequence DEINNPALTV…HFENWSASMI (140 aa). The Cu cation site is built by histidine 161, cysteine 196, glutamate 198, cysteine 200, histidine 204, and methionine 207. A Mg(2+)-binding site is contributed by glutamate 198.

This sequence belongs to the cytochrome c oxidase subunit 2 family. As to quaternary structure, component of the cytochrome c oxidase (complex IV, CIV), a multisubunit enzyme composed of 14 subunits. The complex is composed of a catalytic core of 3 subunits MT-CO1, MT-CO2 and MT-CO3, encoded in the mitochondrial DNA, and 11 supernumerary subunits COX4I, COX5A, COX5B, COX6A, COX6B, COX6C, COX7A, COX7B, COX7C, COX8 and NDUFA4, which are encoded in the nuclear genome. The complex exists as a monomer or a dimer and forms supercomplexes (SCs) in the inner mitochondrial membrane with NADH-ubiquinone oxidoreductase (complex I, CI) and ubiquinol-cytochrome c oxidoreductase (cytochrome b-c1 complex, complex III, CIII), resulting in different assemblies (supercomplex SCI(1)III(2)IV(1) and megacomplex MCI(2)III(2)IV(2)). Found in a complex with TMEM177, COA6, COX18, COX20, SCO1 and SCO2. Interacts with TMEM177 in a COX20-dependent manner. Interacts with COX20. Interacts with COX16. Cu cation is required as a cofactor.

It localises to the mitochondrion inner membrane. It catalyses the reaction 4 Fe(II)-[cytochrome c] + O2 + 8 H(+)(in) = 4 Fe(III)-[cytochrome c] + 2 H2O + 4 H(+)(out). Component of the cytochrome c oxidase, the last enzyme in the mitochondrial electron transport chain which drives oxidative phosphorylation. The respiratory chain contains 3 multisubunit complexes succinate dehydrogenase (complex II, CII), ubiquinol-cytochrome c oxidoreductase (cytochrome b-c1 complex, complex III, CIII) and cytochrome c oxidase (complex IV, CIV), that cooperate to transfer electrons derived from NADH and succinate to molecular oxygen, creating an electrochemical gradient over the inner membrane that drives transmembrane transport and the ATP synthase. Cytochrome c oxidase is the component of the respiratory chain that catalyzes the reduction of oxygen to water. Electrons originating from reduced cytochrome c in the intermembrane space (IMS) are transferred via the dinuclear copper A center (CU(A)) of subunit 2 and heme A of subunit 1 to the active site in subunit 1, a binuclear center (BNC) formed by heme A3 and copper B (CU(B)). The BNC reduces molecular oxygen to 2 water molecules using 4 electrons from cytochrome c in the IMS and 4 protons from the mitochondrial matrix. This is Cytochrome c oxidase subunit 2 (MT-CO2) from Malacomys longipes (Big-eared swamp rat).